The primary structure comprises 105 residues: Pyrimidine/purine nucleoside phosphorylase (105 aa).

It belongs to the nucleoside phosphorylase PpnP family.

The catalysed reaction is a purine D-ribonucleoside + phosphate = a purine nucleobase + alpha-D-ribose 1-phosphate. The enzyme catalyses adenosine + phosphate = alpha-D-ribose 1-phosphate + adenine. It carries out the reaction cytidine + phosphate = cytosine + alpha-D-ribose 1-phosphate. It catalyses the reaction guanosine + phosphate = alpha-D-ribose 1-phosphate + guanine. The catalysed reaction is inosine + phosphate = alpha-D-ribose 1-phosphate + hypoxanthine. The enzyme catalyses thymidine + phosphate = 2-deoxy-alpha-D-ribose 1-phosphate + thymine. It carries out the reaction uridine + phosphate = alpha-D-ribose 1-phosphate + uracil. It catalyses the reaction xanthosine + phosphate = alpha-D-ribose 1-phosphate + xanthine. In terms of biological role, catalyzes the phosphorolysis of diverse nucleosides, yielding D-ribose 1-phosphate and the respective free bases. Can use uridine, adenosine, guanosine, cytidine, thymidine, inosine and xanthosine as substrates. Also catalyzes the reverse reactions. The sequence is that of Pyrimidine/purine nucleoside phosphorylase from Ralstonia nicotianae (strain ATCC BAA-1114 / GMI1000) (Ralstonia solanacearum).